We begin with the raw amino-acid sequence, 361 residues long: RNA 3'-terminal phosphate cyclase (361 aa).

ATP is bound by residues Gln-105, Pro-132, Tyr-295, Asp-298, Gln-299, and His-321. Catalysis depends on His-321, which acts as the Tele-AMP-histidine intermediate.

This sequence belongs to the RNA 3'-terminal cyclase family. Type 1 subfamily.

It localises to the nucleus. The protein localises to the nucleoplasm. It carries out the reaction a 3'-end 3'-phospho-ribonucleotide-RNA + ATP = a 3'-end 2',3'-cyclophospho-ribonucleotide-RNA + AMP + diphosphate. Functionally, catalyzes the conversion of 3'-phosphate to a 2',3'-cyclic phosphodiester at the end of RNA. The mechanism of action of the enzyme occurs in 3 steps: (A) adenylation of the enzyme by ATP; (B) transfer of adenylate to an RNA-N3'P to produce RNA-N3'PP5'A; (C) and attack of the adjacent 2'-hydroxyl on the 3'-phosphorus in the diester linkage to produce the cyclic end product. Likely functions in some aspects of cellular RNA processing. Function plays an important role in a RNA repair and splicing pathway which controls axon regeneration in response to peripheral (PNS) and central nervous system (CNS) injury. In response to axotomy, negatively regulates splicing of Xbp1 which in turn activates downstream effectors which inhibit axon regeneration, including down-regulating the microtubule regulators ringer and futsch. This is RNA 3'-terminal phosphate cyclase from Drosophila melanogaster (Fruit fly).